Here is a 1576-residue protein sequence, read N- to C-terminus: eIF-2-alpha kinase GCN2 (1576 aa).

Residues 16–127 (NEIEALKAIF…SIVQDYLNDW (112 aa)) enclose the RWD domain. Residues 180-204 (QDELQRRSYETPQSSSKKKTNSKET) are disordered. 2 Protein kinase domains span residues 235-511 (VLPL…HVIR) and 556-928 (FEEL…EEFI). Residues 562–570 (LGRGGFGEV) and Lys585 contribute to the ATP site. The tract at residues 673–714 (YNSSADEEDPEASDISFQYSNTSDKEGSSDKDSSIEEASSVK) is disordered. Basic and acidic residues predominate over residues 695 to 706 (SDKEGSSDKDSS). The active-site Proton acceptor is the Asp772.

Belongs to the protein kinase superfamily. Ser/Thr protein kinase family. GCN2 subfamily. In terms of assembly, homodimer; homodimerization is important for kinase activation by uncharged tRNAs. Interacts (via N-terminal RWD domain) with gcn1 (via N- and C-terminus); this interaction stimulates gcn2 kinase activity in a gcn20-dependent manner in response to amino acid starvation. Interacts (via N-terminus) with the gcn1-gcn20 complex on translating ribosomes in amino acid-starved cells; gcn1 may bind near the ribosomal A-site and promotes the transfer of uncharged tRNAs from the A-site to the tRNA-binding domain in gcn2 for its subsequent kinase activation, and hence allowing fil1 translational activation and derepression of amino acid biosynthetic genes. In terms of processing, autophosphorylated.

The protein resides in the cytoplasm. It catalyses the reaction L-seryl-[protein] + ATP = O-phospho-L-seryl-[protein] + ADP + H(+). The catalysed reaction is L-threonyl-[protein] + ATP = O-phospho-L-threonyl-[protein] + ADP + H(+). With respect to regulation, the integrated stress response (ISR) is activated in response to conditions that promote ribosome collisions: gcn1, which acts as a ribosome collision sensor, activates gcn2. The RQC pathway and the integrated stress response (ISR) antagonize each other: hel2 prevents the activation of gcn2, while gcn2 suppresses RQC activation. Ribosome stalling-induced integrated stress response prefers ribosomes with empty A sites. The kinase activity is stimulated upon binding to uncharged tRNAs. Functionally, metabolic-stress sensing protein kinase that phosphorylates the alpha subunit of eukaryotic translation initiation factor 2 (eIF-2-alpha/SUI2) on 'Ser-52' in response to low amino acid, carbon, or purine availability. Required for adapatation to nutrient starvation by acting as a key component of the integrated stress response (ISR), by which cells alter their translational and transcriptional output in response to starvation. Converts phosphorylated eIF-2-alpha/SUI2 either to a competitive inhibitor of translation initiation factor eIF-2B, leading to a global protein synthesis repression, and thus to a reduced overall utilization of amino acids, or to a translational initiation activation of specific mRNAs, such as the transcriptional activator GCN4, and hence allowing GCN4-mediated reprogramming of transcription to alleviate nutrient depletion. Binds uncharged tRNAs. The protein is eIF-2-alpha kinase GCN2 of Schizosaccharomyces pombe (strain 972 / ATCC 24843) (Fission yeast).